Consider the following 132-residue polypeptide: Homeobox protein ceh-1 (132 aa).

Residues 1-60 (MRRARTAFTYEQLVALENKFKTSRYLSVVERLNLAIQLQLSETQVKIWFQNRRTKWKKHN) constitute a DNA-binding region (homeobox). The interval 56 to 80 (WKKHNPGQDANTPQTPPSSDETQIQ) is disordered. Residues 63–80 (QDANTPQTPPSSDETQIQ) show a composition bias toward polar residues.

Its subcellular location is the nucleus. The chain is Homeobox protein ceh-1 (ceh-1) from Caenorhabditis elegans.